A 745-amino-acid chain; its full sequence is MKIKTTVFGYPRIGPKRELKKALEDYWNWKISKVELLETANSLIIQNAKVIQSSGVDLIPSNEFSLYDFILDHSVMFNAVPKRFNRISDPLDRYFAMARGTQELPALEMTKWFNTNYHYIVPEIEDEEFELMENKPLREFALLRDSLSVKTKPVIVGPFTYLKSAKLNMDRVERLSEKILPAYKKLLIKLDAAGVEEIQIDEPAMVMDMEEREIELLTGLYRELTKGLTLKVYIQTYYEAVSAYEKLVFSLSVHGFGFDLVDGKENLENILTLGFPSDKVLIAGVVSGRDPWRTDFTVVMSMLERLFRVTDKIMLSNSSPLIHLPITVEAERGHIQEDILNMLSFANERLEELTILKRAINDGAALPARKSIVHEIFSKAEVRSKISSIDEKAILRKPEFQERYRMQMDSLKLPLFPTTTIGSFPQTKEVRKFRADYKNGKITEEEYKKFIFQEIEKAVKIQEELDIDVLVHGEFERTDMVEFFAEKLKGFAITKNGWVQSYGSRCVRPPVIYGDVWRDKALTVEETLYAQSLTPRPVKGIMTGAVTILQWSYPRKDISRREIAYQIALALKEEVLELEKRGIKIIQIDEPAFREGLPLKRNKQDEYFDWTINSFRLTTADVSPFTQIHTHMCYSDFNEIIDRIYALDADVISIEASRSKGEILSAFENFRYDHGIGLGVYDIHSPRVPSVEEMIEIIERSVSLIDKSLFWINPDCGLKTRGWQETVASLKNMVLAAKAMRKREV.

5-methyltetrahydropteroyltri-L-glutamate is bound by residues 17-20 (RELK) and lysine 111. L-homocysteine is bound by residues 421 to 423 (IGS) and glutamate 474. L-methionine is bound by residues 421 to 423 (IGS) and glutamate 474. 5-methyltetrahydropteroyltri-L-glutamate is bound by residues 505-506 (RC) and tryptophan 551. L-homocysteine is bound at residue aspartate 589. Aspartate 589 is a binding site for L-methionine. A 5-methyltetrahydropteroyltri-L-glutamate-binding site is contributed by glutamate 595. The Zn(2+) site is built by histidine 631, cysteine 633, and glutamate 655. The active-site Proton donor is histidine 684. Residue cysteine 716 coordinates Zn(2+).

Belongs to the vitamin-B12 independent methionine synthase family. Requires Zn(2+) as cofactor.

The catalysed reaction is 5-methyltetrahydropteroyltri-L-glutamate + L-homocysteine = tetrahydropteroyltri-L-glutamate + L-methionine. The protein operates within amino-acid biosynthesis; L-methionine biosynthesis via de novo pathway; L-methionine from L-homocysteine (MetE route): step 1/1. Functionally, catalyzes the transfer of a methyl group from 5-methyltetrahydrofolate to homocysteine resulting in methionine formation. The protein is 5-methyltetrahydropteroyltriglutamate--homocysteine methyltransferase of Thermodesulfovibrio yellowstonii (strain ATCC 51303 / DSM 11347 / YP87).